A 133-amino-acid polypeptide reads, in one-letter code: Large-conductance mechanosensitive channel (133 aa).

The next 2 helical transmembrane spans lie at 10–30 and 76–96; these read FAVKGNVVDMAVGIVIGAAFG and GIFVQTLVDFIIIAFAIFLVV.

Belongs to the MscL family. In terms of assembly, homopentamer.

The protein localises to the cell inner membrane. Channel that opens in response to stretch forces in the membrane lipid bilayer. May participate in the regulation of osmotic pressure changes within the cell. This Chlorobium phaeobacteroides (strain BS1) protein is Large-conductance mechanosensitive channel.